A 449-amino-acid chain; its full sequence is Na(+)/H(+) antiporter NhaA 2 (449 aa).

A run of 11 helical transmembrane segments spans residues 32-52 (IEATSGAVLLLATVVALTLSN), 87-107 (GLMTLFFFIVALEIKREVVLG), 114-134 (MVALSVVAAAGGMLVPMGLYL), 145-165 (GWGVVMPTDTAFVIGCLALLG), 174-194 (VFLLSLAVVDDLAAILVVAVG), 202-222 (TALALGAVGLVIIRGMALLGV), 233-253 (AIIWLAVNASGIHATIVGVIL), 318-338 (WVAFGVMPLFALANAGVPITI), 347-367 (LAVMAGFVLGKPIGVTAFAWL), 382-402 (WGGLVGGALLTGIGFTMALFI), and 417-437 (LGILAASVVSSVAGLTLLCAL).

The protein belongs to the NhaA Na(+)/H(+) (TC 2.A.33) antiporter family.

It localises to the cell inner membrane. The enzyme catalyses Na(+)(in) + 2 H(+)(out) = Na(+)(out) + 2 H(+)(in). Its function is as follows. Na(+)/H(+) antiporter that extrudes sodium in exchange for external protons. In Acidiphilium cryptum (strain JF-5), this protein is Na(+)/H(+) antiporter NhaA 2.